The chain runs to 467 residues: Regulator of nonsense transcripts 3B (467 aa).

Disordered regions lie at residues 1-30 (MKEDKENTRPREKKVEIKCDENDKQEKPCK) and 197-467 (REEK…KAAE). Composition is skewed to basic and acidic residues over residues 197-389 (REEK…EHTG) and 396-421 (RPEKSSRDSKKEESARKDRLRNKDRP). The segment covering 435 to 447 (RGGGGGGGTGGDG) has biased composition (gly residues). The span at 449–467 (AAEKRAEREAKKNQEKAAE) shows a compositional bias: basic and acidic residues.

This sequence belongs to the RENT3 family.

Its subcellular location is the nucleus. The protein resides in the cytoplasm. Functionally, involved in nonsense-mediated decay (NMD) of mRNAs containing premature stop codons by associating with the nuclear exon junction complex (EJC) and serving as link between the EJC core and NMD machinery. Recruits UPF2 at the cytoplasmic side of the nuclear envelope and the subsequent formation of an UPF1-UPF2-UPF3 surveillance complex (including UPF1 bound to release factors at the stalled ribosome) is believed to activate NMD. In cooperation with UPF2 stimulates both ATPase and RNA helicase activities of UPF1. Binds spliced mRNA upstream of exon-exon junctions. The protein is Regulator of nonsense transcripts 3B of Danio rerio (Zebrafish).